The chain runs to 1032 residues: Beta-galactosidase (1032 aa).

Positions 100 and 198 each coordinate substrate. Asp-198 contacts Na(+). Mg(2+)-binding residues include Glu-413, His-415, and Glu-458. Substrate-binding positions include Glu-458 and 534–537 (EYAH). Glu-458 (proton donor) is an active-site residue. Glu-534 serves as the catalytic Nucleophile. Asn-594 is a Mg(2+) binding site. The Na(+) site is built by Phe-598 and Asn-601. Substrate-binding residues include Asn-601 and Trp-1006.

The protein belongs to the glycosyl hydrolase 2 family. Homotetramer. Mg(2+) is required as a cofactor. The cofactor is Na(+).

It carries out the reaction Hydrolysis of terminal non-reducing beta-D-galactose residues in beta-D-galactosides.. The chain is Beta-galactosidase from Vibrio vulnificus (strain CMCP6).